The following is a 542-amino-acid chain: CTP synthase (542 aa).

Residues Met1–Leu265 are amidoligase domain. A CTP-binding site is contributed by Ser13. Position 13 (Ser13) interacts with UTP. ATP is bound by residues Ser14–Ile19 and Asp71. Mg(2+) is bound by residues Asp71 and Glu139. Residues Asp146–Glu148, Lys186–Gln191, and Lys222 each bind CTP. Residues Lys186–Gln191 and Lys222 each bind UTP. Residues Asn290–Ala542 enclose the Glutamine amidotransferase type-1 domain. Residue Gly351 participates in L-glutamine binding. Cys378 (nucleophile; for glutamine hydrolysis) is an active-site residue. L-glutamine-binding positions include Leu379–Gln382, Glu402, and Arg468. Residues His515 and Glu517 contribute to the active site.

Belongs to the CTP synthase family. Homotetramer.

It carries out the reaction UTP + L-glutamine + ATP + H2O = CTP + L-glutamate + ADP + phosphate + 2 H(+). It catalyses the reaction L-glutamine + H2O = L-glutamate + NH4(+). The catalysed reaction is UTP + NH4(+) + ATP = CTP + ADP + phosphate + 2 H(+). The protein operates within pyrimidine metabolism; CTP biosynthesis via de novo pathway; CTP from UDP: step 2/2. Its activity is regulated as follows. Allosterically activated by GTP, when glutamine is the substrate; GTP has no effect on the reaction when ammonia is the substrate. The allosteric effector GTP functions by stabilizing the protein conformation that binds the tetrahedral intermediate(s) formed during glutamine hydrolysis. Inhibited by the product CTP, via allosteric rather than competitive inhibition. Its function is as follows. Catalyzes the ATP-dependent amination of UTP to CTP with either L-glutamine or ammonia as the source of nitrogen. Regulates intracellular CTP levels through interactions with the four ribonucleotide triphosphates. The polypeptide is CTP synthase (Methylobacillus flagellatus (strain ATCC 51484 / DSM 6875 / VKM B-1610 / KT)).